The chain runs to 490 residues: Asparagine--tRNA ligase (490 aa).

The protein belongs to the class-II aminoacyl-tRNA synthetase family. In terms of assembly, homodimer.

Its subcellular location is the cytoplasm. It catalyses the reaction tRNA(Asn) + L-asparagine + ATP = L-asparaginyl-tRNA(Asn) + AMP + diphosphate + H(+). This Rhodopirellula baltica (strain DSM 10527 / NCIMB 13988 / SH1) protein is Asparagine--tRNA ligase.